Consider the following 292-residue polypeptide: ATP phosphoribosyltransferase (292 aa).

The protein belongs to the ATP phosphoribosyltransferase family. Long subfamily. Mg(2+) serves as cofactor.

Its subcellular location is the cytoplasm. The catalysed reaction is 1-(5-phospho-beta-D-ribosyl)-ATP + diphosphate = 5-phospho-alpha-D-ribose 1-diphosphate + ATP. Its pathway is amino-acid biosynthesis; L-histidine biosynthesis; L-histidine from 5-phospho-alpha-D-ribose 1-diphosphate: step 1/9. Feedback inhibited by histidine. Functionally, catalyzes the condensation of ATP and 5-phosphoribose 1-diphosphate to form N'-(5'-phosphoribosyl)-ATP (PR-ATP). Has a crucial role in the pathway because the rate of histidine biosynthesis seems to be controlled primarily by regulation of HisG enzymatic activity. The sequence is that of ATP phosphoribosyltransferase from Desulfatibacillum aliphaticivorans.